Reading from the N-terminus, the 679-residue chain is Glycine--tRNA ligase beta subunit (679 aa).

Belongs to the class-II aminoacyl-tRNA synthetase family. Tetramer of two alpha and two beta subunits.

The protein resides in the cytoplasm. The enzyme catalyses tRNA(Gly) + glycine + ATP = glycyl-tRNA(Gly) + AMP + diphosphate. This chain is Glycine--tRNA ligase beta subunit, found in Streptococcus agalactiae serotype Ia (strain ATCC 27591 / A909 / CDC SS700).